Consider the following 143-residue polypeptide: uncharacterized protein (143 aa).

This is an uncharacterized protein from Archaeoglobus fulgidus (strain ATCC 49558 / DSM 4304 / JCM 9628 / NBRC 100126 / VC-16).